The following is a 282-amino-acid chain: Pantothenate synthetase (282 aa).

Residue 30–37 participates in ATP binding; sequence MGYLHEGH. The Proton donor role is filled by H37. Position 61 (Q61) interacts with (R)-pantoate. Q61 provides a ligand contact to beta-alanine. Residue 147–150 participates in ATP binding; that stretch reads GMKD. (R)-pantoate is bound at residue Q153. Residues V176 and 184–187 each bind ATP; that span reads KSSR.

Belongs to the pantothenate synthetase family. As to quaternary structure, homodimer.

It is found in the cytoplasm. It carries out the reaction (R)-pantoate + beta-alanine + ATP = (R)-pantothenate + AMP + diphosphate + H(+). It functions in the pathway cofactor biosynthesis; (R)-pantothenate biosynthesis; (R)-pantothenate from (R)-pantoate and beta-alanine: step 1/1. Its function is as follows. Catalyzes the condensation of pantoate with beta-alanine in an ATP-dependent reaction via a pantoyl-adenylate intermediate. This Bacillus cereus (strain B4264) protein is Pantothenate synthetase.